The chain runs to 345 residues: S-adenosylmethionine:tRNA ribosyltransferase-isomerase (345 aa).

It belongs to the QueA family. As to quaternary structure, monomer.

The protein resides in the cytoplasm. The catalysed reaction is 7-aminomethyl-7-carbaguanosine(34) in tRNA + S-adenosyl-L-methionine = epoxyqueuosine(34) in tRNA + adenine + L-methionine + 2 H(+). It functions in the pathway tRNA modification; tRNA-queuosine biosynthesis. In terms of biological role, transfers and isomerizes the ribose moiety from AdoMet to the 7-aminomethyl group of 7-deazaguanine (preQ1-tRNA) to give epoxyqueuosine (oQ-tRNA). The chain is S-adenosylmethionine:tRNA ribosyltransferase-isomerase from Anaeromyxobacter sp. (strain K).